A 338-amino-acid chain; its full sequence is Ornithine carbamoyltransferase (338 aa).

Position 2 is an N-acetylserine (Ser-2). Carbamoyl phosphate-binding positions include 67–70 (STRT), Arg-118, His-145, and Gln-148. L-ornithine contacts are provided by Asn-185, Asp-249, Ser-253, and Met-254. The active-site Proton acceptor is Cys-289. Residues 289–290 (CL) and Arg-316 contribute to the carbamoyl phosphate site.

This sequence belongs to the aspartate/ornithine carbamoyltransferase superfamily. OTCase family. Interacts with CAR1.

The protein localises to the cytoplasm. The enzyme catalyses carbamoyl phosphate + L-ornithine = L-citrulline + phosphate + H(+). The protein operates within amino-acid biosynthesis; L-arginine biosynthesis; L-arginine from L-ornithine and carbamoyl phosphate: step 1/3. With respect to regulation, forms a stable complex with CAR1 in the presence of ornithine and arginine. In this complex CAR1 retains activity, but ARG3 activity is inhibited. The polypeptide is Ornithine carbamoyltransferase (ARG3) (Saccharomyces cerevisiae (strain ATCC 204508 / S288c) (Baker's yeast)).